Reading from the N-terminus, the 477-residue chain is Prolyl tri/tetrapeptidyl aminopeptidase (477 aa).

The first 27 residues, methionine 1–alanine 27, serve as a signal peptide directing secretion. The propeptide occupies alanine 28 to proline 33. The tract at residues glutamine 448–proline 477 is disordered. Positions alanine 462–proline 477 are enriched in basic and acidic residues.

It belongs to the peptidase S37 family.

It localises to the secreted. The protein localises to the cell surface. Its activity is regulated as follows. Completely inhibited by the serine protease inhibitor phenylmethylsulfonyl fluoride. Partially inhibited by the serine protease inhibitor Pefabloc. Not inhibited by cysteine proteinase-specific or metalloproteinase-specific inhibitors. Not inhibited by prolinal or its derivatives. EDTA and EGTA both partially inhibit this enzyme. EDTA has no effect on activity. Has proline-specific tripeptidyl aminopeptidase and tetrapeptidyl aminopeptidase activity. Activity is highest against tripeptides containing an Ala-Pro motif. Involved in the final processing of transglutaminase, by removing either the tetrapeptide Phe-Arg-Ala-Pro left after TAMEP or SAM-P45 hydrolysis, or the tripeptide Arg-Ala-Pro left after SGMP II hydrolysis in a single step. In Streptomyces mobaraensis (Streptoverticillium mobaraense), this protein is Prolyl tri/tetrapeptidyl aminopeptidase (ptp).